We begin with the raw amino-acid sequence, 76 residues long: Omega-conotoxin-like TxO5 (76 aa).

An N-terminal signal peptide occupies residues 1–22 (MKLTCMVIVAVLFLTAWTFVTA). A propeptide spanning residues 23 to 50 (ITSNGLENLFPNAHHEMKNPEASKLNKR) is cleaved from the precursor. 3 disulfides stabilise this stretch: C51–C66, C58–C70, and C65–C75.

It belongs to the conotoxin O1 superfamily. Expressed by the venom duct.

The protein localises to the secreted. Functionally, omega-conotoxins act at presynaptic membranes, they bind and block voltage-gated calcium channels (Cav). The chain is Omega-conotoxin-like TxO5 (TXO5) from Conus textile (Cloth-of-gold cone).